The primary structure comprises 309 residues: MKKPELLVTPTSTADILPLIQAGATAFLVGEQRYGLRLAGEFSREDVTKAVEIAHKEGAKVYVAVNAIFHNDKVGELGEYLAFLAEAGVDAAVFGDPAVLMAARESAPDLKLHWSTETTGTNYYTCNYWGRKGAARSVLARELNMDSIVEIKENAEVEIEIQVHGMTCMFQSKRSLIGNYFEYQGKVMDIERKKKESGMFLHDKERDNKYPIFEDENGTHIMSPNDVCIIDELEELIDAGIDSFKIDGVLKMPEYLIEVTKMYREAIDLCVENRDEYEAKKEDWIERIESIQPVNRKIDTGFFFKETVY.

It belongs to the peptidase U32 family.

Functionally, involved in prephenate-dependent formation of 5-hydroxyuridine (ho5U) modification at position 34 in tRNAs, the first step in 5-methoxyuridine (mo5U) biosynthesis. The chain is tRNA hydroxylation protein P2 from Bacillus subtilis (strain 168).